Reading from the N-terminus, the 138-residue chain is Small ribosomal subunit protein uS11c (138 aa).

It belongs to the universal ribosomal protein uS11 family. As to quaternary structure, part of the 30S ribosomal subunit.

Its subcellular location is the plastid. The protein localises to the chloroplast. The chain is Small ribosomal subunit protein uS11c from Illicium oligandrum (Star anise).